The chain runs to 438 residues: DNA primase DnaG (438 aa).

The 75-residue stretch at 171–245 (DAILVVEGRA…DIDYVARAPE (75 aa)) folds into the Toprim domain. Mg(2+) is bound by residues Glu-177, Asp-219, and Asp-221.

The protein belongs to the archaeal DnaG primase family. Forms a ternary complex with MCM helicase and DNA. Component of the archaeal exosome complex. Requires Mg(2+) as cofactor.

The enzyme catalyses ssDNA + n NTP = ssDNA/pppN(pN)n-1 hybrid + (n-1) diphosphate.. RNA polymerase that catalyzes the synthesis of short RNA molecules used as primers for DNA polymerase during DNA replication. Also part of the exosome, which is a complex involved in RNA degradation. Acts as a poly(A)-binding protein that enhances the interaction between heteromeric, adenine-rich transcripts and the exosome. The protein is DNA primase DnaG of Methanothrix thermoacetophila (strain DSM 6194 / JCM 14653 / NBRC 101360 / PT) (Methanosaeta thermophila).